An 89-amino-acid polypeptide reads, in one-letter code: MYLDAAKKQEIFSKYGKSNTDTGSAEAQIALFSYRITHLTEHMKLNRKDYSTERALTMLVGKRRALLDYLKAKDITRYRDIIKELGLRK.

This sequence belongs to the universal ribosomal protein uS15 family. Part of the 30S ribosomal subunit. Forms a bridge to the 50S subunit in the 70S ribosome, contacting the 23S rRNA.

Its function is as follows. One of the primary rRNA binding proteins, it binds directly to 16S rRNA where it helps nucleate assembly of the platform of the 30S subunit by binding and bridging several RNA helices of the 16S rRNA. In terms of biological role, forms an intersubunit bridge (bridge B4) with the 23S rRNA of the 50S subunit in the ribosome. The polypeptide is Small ribosomal subunit protein uS15 (Bacteroides fragilis (strain ATCC 25285 / DSM 2151 / CCUG 4856 / JCM 11019 / LMG 10263 / NCTC 9343 / Onslow / VPI 2553 / EN-2)).